The primary structure comprises 371 residues: Maltose/maltodextrin import ATP-binding protein MalK (371 aa).

In terms of domain architecture, ABC transporter spans valine 4–isoleucine 234. Glycine 36 to serine 43 provides a ligand contact to ATP.

This sequence belongs to the ABC transporter superfamily. Maltooligosaccharide importer (TC 3.A.1.1.1) family. In terms of assembly, the complex is composed of two ATP-binding proteins (MalK), two transmembrane proteins (MalG and MalK) and a solute-binding protein (MalE).

It is found in the cell inner membrane. The enzyme catalyses D-maltose(out) + ATP + H2O = D-maltose(in) + ADP + phosphate + H(+). In terms of biological role, part of the ABC transporter complex MalEFGK involved in maltose/maltodextrin import. Responsible for energy coupling to the transport system. The chain is Maltose/maltodextrin import ATP-binding protein MalK from Escherichia coli O6:H1 (strain CFT073 / ATCC 700928 / UPEC).